A 350-amino-acid polypeptide reads, in one-letter code: GTP 3',8-cyclase (350 aa).

The region spanning 27 to 245 is the Radical SAM core domain; it reads TFGRIATDLR…LRAHFTLVPD (219 aa). R36 provides a ligand contact to GTP. [4Fe-4S] cluster-binding residues include C43 and C47. Y49 serves as a coordination point for S-adenosyl-L-methionine. C50 contacts [4Fe-4S] cluster. R87 provides a ligand contact to GTP. Residue G91 participates in S-adenosyl-L-methionine binding. T118 contacts GTP. S142 contributes to the S-adenosyl-L-methionine binding site. Position 179 (K179) interacts with GTP. M213 serves as a coordination point for S-adenosyl-L-methionine. Positions 277 and 280 each coordinate [4Fe-4S] cluster. 282 to 284 serves as a coordination point for GTP; that stretch reads RTR. C294 lines the [4Fe-4S] cluster pocket.

The protein belongs to the radical SAM superfamily. MoaA family. In terms of assembly, monomer and homodimer. [4Fe-4S] cluster is required as a cofactor.

It carries out the reaction GTP + AH2 + S-adenosyl-L-methionine = (8S)-3',8-cyclo-7,8-dihydroguanosine 5'-triphosphate + 5'-deoxyadenosine + L-methionine + A + H(+). It participates in cofactor biosynthesis; molybdopterin biosynthesis. In terms of biological role, catalyzes the cyclization of GTP to (8S)-3',8-cyclo-7,8-dihydroguanosine 5'-triphosphate. This Mycobacterium sp. (strain JLS) protein is GTP 3',8-cyclase.